Consider the following 617-residue polypeptide: Probable LRR receptor-like serine/threonine-protein kinase RKF3 (617 aa).

The signal sequence occupies residues 1–20; sequence MLFLRRIAVVFFVFTSFSAA. At 21 to 212 the chain is on the extracellular side; it reads QNSTCPLDFS…PTSSGANKVK (192 aa). 4 N-linked (GlcNAc...) asparagine glycosylation sites follow: Asn22, Asn124, Asn135, and Asn165. Residues 213–233 form a helical membrane-spanning segment; sequence VLVSSFSVLLVASVLVITAWF. The Cytoplasmic segment spans residues 234–617; the sequence is WYCRRKKSKL…DGPSGNTNTT (384 aa). Residues 283–563 enclose the Protein kinase domain; sequence FSRHNIIGRG…VKMLESNEFT (281 aa). Residues 289–297 and Lys311 each bind ATP; that span reads IGRGGYGNV. Asp412 functions as the Proton acceptor in the catalytic mechanism. A disordered region spans residues 585–617; that stretch reads VSSSSGSGKLTSPTGYQAFSFGGDGPSGNTNTT.

This sequence belongs to the protein kinase superfamily. Ser/Thr protein kinase family. As to expression, expressed in the whole plant at low levels.

Its subcellular location is the cell membrane. It carries out the reaction L-seryl-[protein] + ATP = O-phospho-L-seryl-[protein] + ADP + H(+). The enzyme catalyses L-threonyl-[protein] + ATP = O-phospho-L-threonyl-[protein] + ADP + H(+). In Arabidopsis thaliana (Mouse-ear cress), this protein is Probable LRR receptor-like serine/threonine-protein kinase RKF3 (RKF3).